The chain runs to 242 residues: 1-(5-phosphoribosyl)-5-[(5-phosphoribosylamino)methylideneamino] imidazole-4-carboxamide isomerase (242 aa).

Catalysis depends on D8, which acts as the Proton acceptor. The Proton donor role is filled by D129.

The protein belongs to the HisA/HisF family.

Its subcellular location is the cytoplasm. The catalysed reaction is 1-(5-phospho-beta-D-ribosyl)-5-[(5-phospho-beta-D-ribosylamino)methylideneamino]imidazole-4-carboxamide = 5-[(5-phospho-1-deoxy-D-ribulos-1-ylimino)methylamino]-1-(5-phospho-beta-D-ribosyl)imidazole-4-carboxamide. The protein operates within amino-acid biosynthesis; L-histidine biosynthesis; L-histidine from 5-phospho-alpha-D-ribose 1-diphosphate: step 4/9. The sequence is that of 1-(5-phosphoribosyl)-5-[(5-phosphoribosylamino)methylideneamino] imidazole-4-carboxamide isomerase from Beijerinckia indica subsp. indica (strain ATCC 9039 / DSM 1715 / NCIMB 8712).